A 418-amino-acid chain; its full sequence is Phosphopentomutase (418 aa).

6 residues coordinate Mn(2+): D10, D297, H302, D338, H339, and H350.

The protein belongs to the phosphopentomutase family. Mn(2+) serves as cofactor.

It localises to the cytoplasm. The catalysed reaction is 2-deoxy-alpha-D-ribose 1-phosphate = 2-deoxy-D-ribose 5-phosphate. It carries out the reaction alpha-D-ribose 1-phosphate = D-ribose 5-phosphate. It functions in the pathway carbohydrate degradation; 2-deoxy-D-ribose 1-phosphate degradation; D-glyceraldehyde 3-phosphate and acetaldehyde from 2-deoxy-alpha-D-ribose 1-phosphate: step 1/2. Functionally, isomerase that catalyzes the conversion of deoxy-ribose 1-phosphate (dRib-1-P) and ribose 1-phosphate (Rib-1-P) to deoxy-ribose 5-phosphate (dRib-5-P) and ribose 5-phosphate (Rib-5-P), respectively. This Chromohalobacter salexigens (strain ATCC BAA-138 / DSM 3043 / CIP 106854 / NCIMB 13768 / 1H11) protein is Phosphopentomutase.